Consider the following 246-residue polypeptide: Thaumatin-like protein 1a (246 aa).

Positions 1 to 24 (MMKSQVASLLGLTLAILFFSGAHA) are cleaved as a signal peptide. 8 disulfide bridges follow: Cys-33–Cys-245, Cys-81–Cys-91, Cys-96–Cys-103, Cys-151–Cys-234, Cys-156–Cys-217, Cys-164–Cys-180, Cys-184–Cys-193, and Cys-194–Cys-204.

The protein belongs to the thaumatin family.

The protein localises to the secreted. This Malus domestica (Apple) protein is Thaumatin-like protein 1a (TL1).